The primary structure comprises 420 residues: Tyrosine--tRNA ligase 1 (420 aa).

Position 35 (Tyr35) interacts with L-tyrosine. The short motif at 40-49 (PTAGSLHIGH) is the 'HIGH' region element. Residues Tyr172 and Gln176 each contribute to the L-tyrosine site. The 'KMSKS' region signature appears at 232–236 (KFGKT). Lys235 is an ATP binding site. Residues 355–419 (INIAELLVKS…GKKQFRLIKL (65 aa)) form the S4 RNA-binding domain.

The protein belongs to the class-I aminoacyl-tRNA synthetase family. TyrS type 1 subfamily. As to quaternary structure, homodimer.

The protein resides in the cytoplasm. It catalyses the reaction tRNA(Tyr) + L-tyrosine + ATP = L-tyrosyl-tRNA(Tyr) + AMP + diphosphate + H(+). Functionally, catalyzes the attachment of tyrosine to tRNA(Tyr) in a two-step reaction: tyrosine is first activated by ATP to form Tyr-AMP and then transferred to the acceptor end of tRNA(Tyr). This is Tyrosine--tRNA ligase 1 from Pseudoalteromonas translucida (strain TAC 125).